Here is a 333-residue protein sequence, read N- to C-terminus: Protein XAP5 CIRCADIAN TIMEKEEPER (333 aa).

Coiled coils occupy residues 12 to 43 (AQDA…SDGQ) and 70 to 116 (TREQ…VRGD). The span at 89-98 (EKEKLQKLQQ) shows a compositional bias: basic and acidic residues. Residues 89–171 (EKEKLQKLQQ…REREAEEQAE (83 aa)) are disordered. A compositionally biased stretch (acidic residues) spans 123 to 136 (DEIENGSDEDEFEN). The segment covering 160–171 (PDREREAEEQAE) has biased composition (basic and acidic residues).

This sequence belongs to the FAM50 family.

The protein localises to the nucleus. Its function is as follows. Involved in light regulation of the circadian clock and photomorphogenesis. The chain is Protein XAP5 CIRCADIAN TIMEKEEPER (XCT) from Oryza sativa subsp. indica (Rice).